The following is a 527-amino-acid chain: Acyl-coenzyme A thioesterase 4, mitochondrial (527 aa).

Residues 1–75 (MMTPIGIRIR…FLFDPPPIRF (75 aa)) constitute a mitochondrion transit peptide. HotDog ACOT-type domains are found at residues 172–294 (ILYN…RDSK) and 370–487 (KDTC…GPEA).

This sequence belongs to the acyl coenzyme A hydrolase family. In terms of tissue distribution, mostly expressed at low levels in glandular trichomes (lupulin glands), and, to a lower extent, in stems, leaves, flowers and cones.

It is found in the mitochondrion. The enzyme catalyses 2-methylpropanoyl-CoA + H2O = 2-methylpropanoate + CoA + H(+). It carries out the reaction propanoyl-CoA + H2O = propanoate + CoA + H(+). The catalysed reaction is octanoyl-CoA + H2O = octanoate + CoA + H(+). It catalyses the reaction butanoyl-CoA + H2O = butanoate + CoA + H(+). The enzyme catalyses 3-methylbutanoyl-CoA + H2O = 3-methylbutanoate + CoA + H(+). It carries out the reaction 2-methylbutanoyl-CoA + H2O = 2-methylbutanoate + CoA + H(+). In terms of biological role, acyl-CoA thioesterases are a group of enzymes that catalyze the hydrolysis of acyl-CoAs to the free fatty acid and coenzyme A (CoASH), providing the potential to regulate intracellular levels of acyl-CoAs, free fatty acids and CoASH. Active on acyl CoAs with short chains (propanoyl-CoA and butanoyl-CoA), branched short chains (2-methylpropanoyl-CoA, 2-methylbutanoyl-CoA and 3-methylbutanoyl-CoA) and medium chains (octanoyl-CoA). This chain is Acyl-coenzyme A thioesterase 4, mitochondrial, found in Humulus lupulus (European hop).